We begin with the raw amino-acid sequence, 79 residues long: Dolichyl-diphosphooligosaccharide--protein glycosyltransferase subunit TMEM258 (79 aa).

2 helical membrane passes run 17–37 and 55–75; these read VFPH…AWFF and LISL…LLWV.

The protein belongs to the OST5 family. In terms of assembly, component of the oligosaccharyltransferase (OST) complex.

The protein localises to the membrane. The protein resides in the endoplasmic reticulum. It localises to the cytoplasm. The protein operates within protein modification; protein glycosylation. Functionally, subunit of the oligosaccharyl transferase (OST) complex that catalyzes the initial transfer of a defined glycan (Glc(3)Man(9)GlcNAc(2) in eukaryotes) from the lipid carrier dolichol-pyrophosphate to an asparagine residue within an Asn-X-Ser/Thr consensus motif in nascent polypeptide chains, the first step in protein N-glycosylation. N-glycosylation occurs cotranslationally and the complex associates with the Sec61 complex at the channel-forming translocon complex that mediates protein translocation across the endoplasmic reticulum (ER). All subunits are required for a maximal enzyme activity. The chain is Dolichyl-diphosphooligosaccharide--protein glycosyltransferase subunit TMEM258 from Xenopus laevis (African clawed frog).